A 207-amino-acid polypeptide reads, in one-letter code: Dephospho-CoA kinase (207 aa).

One can recognise a DPCK domain in the interval 10–207; that stretch reads ILGLTGGIGS…FYLTLRGGQP (198 aa). ATP is bound at residue 18–23; that stretch reads GSGKSA.

This sequence belongs to the CoaE family.

The protein localises to the cytoplasm. The enzyme catalyses 3'-dephospho-CoA + ATP = ADP + CoA + H(+). It functions in the pathway cofactor biosynthesis; coenzyme A biosynthesis; CoA from (R)-pantothenate: step 5/5. Its function is as follows. Catalyzes the phosphorylation of the 3'-hydroxyl group of dephosphocoenzyme A to form coenzyme A. This Pseudomonas putida (Arthrobacter siderocapsulatus) protein is Dephospho-CoA kinase.